The sequence spans 157 residues: Protein Smg (157 aa).

Belongs to the Smg family.

This is Protein Smg from Enterobacter sp. (strain 638).